Reading from the N-terminus, the 715-residue chain is Forkhead box protein P2 (715 aa).

The span at 1–28 shows a compositional bias: polar residues; it reads MMQESATETISNSSMNQNGMSTLSSQLD. Disordered stretches follow at residues 1–46 and 281–339; these read MMQE…EVST and DNGI…TGAS. The span at 292 to 305 shows a compositional bias: low complexity; that stretch reads TTNNSSSTTSSNTS. A compositionally biased stretch (basic and acidic residues) spans 326 to 337; sequence ARRDSSSHEETG. Residues 346–371 form a C2H2-type zinc finger; the sequence is GVCKWPGCESICEDFGQFLKHLNNEH. The tract at residues 388-409 is leucine-zipper; sequence VQQLEIQLSKERERLQAMMTHL. Residues 422-426 form a CTBP1-binding region; sequence PLNLV. Low complexity predominate over residues 438–459; it reads TSPQSLPQTPTTPTAPVTPITQ. Residues 438–465 are disordered; it reads TSPQSLPQTPTTPTAPVTPITQGPSVIT. A DNA-binding region (fork-head) is located at residues 504-594; the sequence is RPPFTYATLI…SQKITGSPTL (91 aa). 2 disordered regions span residues 649 to 668 and 678 to 715; these read LDHIDSNGNSSPGCSPQPHI and VIAEDEDCPMSLVTTANHSPELEDDREIEEEPLSEDLE. A compositionally biased stretch (acidic residues) spans 699-715; the sequence is LEDDREIEEEPLSEDLE.

As to quaternary structure, forms homodimers and heterodimers with FOXP1 and FOXP4. Dimerization is required for DNA-binding. Interacts with CTBP1. Interacts with FOXP1. Isoform 1 and isoform 3 interact with TBR1. Interacts with ZMYM2. Isoform 1 and isoform 6 are expressed in adult and fetal brain, caudate nucleus and lung.

The protein resides in the nucleus. In terms of biological role, transcriptional repressor that may play a role in the specification and differentiation of lung epithelium. May also play a role in developing neural, gastrointestinal and cardiovascular tissues. Can act with CTBP1 to synergistically repress transcription but CTPBP1 is not essential. Plays a role in synapse formation by regulating SRPX2 levels. Involved in neural mechanisms mediating the development of speech and language. This Homo sapiens (Human) protein is Forkhead box protein P2 (FOXP2).